Here is a 261-residue protein sequence, read N- to C-terminus: Cytochrome c oxidase subunit 3 (261 aa).

Residues 1-15 (MAHQAHAYHMVDPSP) are Mitochondrial matrix-facing. The chain crosses the membrane as a helical span at residues 16–34 (WPLTGAIAALLLTSGTAVW). Over 35 to 40 (FHFHSL) the chain is Mitochondrial intermembrane. The chain crosses the membrane as a helical span at residues 41 to 66 (TLLTLGNVLLLLTMYQWWRDIIREGT). The Mitochondrial matrix portion of the chain corresponds to 67 to 72 (FQGHHT). A helical transmembrane segment spans residues 73-105 (PPVQKGLRYGMILFITSEVFFFLGFFWAFYHAS). The Mitochondrial intermembrane portion of the chain corresponds to 106-128 (LAPTPELGGCWPPTGITTLDPFE). Residues 129 to 152 (VPLLNTAVLLASGVTVTWAHHSIM) form a helical membrane-spanning segment. The Mitochondrial matrix segment spans residues 153–155 (EGE). The helical transmembrane segment at 156–183 (RKQTIQALTLTILLGFYFTFLQGMEYYE) threads the bilayer. Over 184-190 (APFTIAD) the chain is Mitochondrial intermembrane. The helical transmembrane segment at 191–223 (GVYGSTFFVATGFHGLHVIIGSTFLAVCLLRQV) threads the bilayer. Topologically, residues 224-232 (QYHFTSEHH) are mitochondrial matrix. A helical membrane pass occupies residues 233–256 (FGFEAAAWYWHFVDVVWLFLYVSI). The Mitochondrial intermembrane segment spans residues 257–261 (YWWGS).

The protein belongs to the cytochrome c oxidase subunit 3 family. In terms of assembly, component of the cytochrome c oxidase (complex IV, CIV), a multisubunit enzyme composed of 14 subunits. The complex is composed of a catalytic core of 3 subunits MT-CO1, MT-CO2 and MT-CO3, encoded in the mitochondrial DNA, and 11 supernumerary subunits COX4I, COX5A, COX5B, COX6A, COX6B, COX6C, COX7A, COX7B, COX7C, COX8 and NDUFA4, which are encoded in the nuclear genome. The complex exists as a monomer or a dimer and forms supercomplexes (SCs) in the inner mitochondrial membrane with NADH-ubiquinone oxidoreductase (complex I, CI) and ubiquinol-cytochrome c oxidoreductase (cytochrome b-c1 complex, complex III, CIII), resulting in different assemblies (supercomplex SCI(1)III(2)IV(1) and megacomplex MCI(2)III(2)IV(2)).

The protein localises to the mitochondrion inner membrane. It catalyses the reaction 4 Fe(II)-[cytochrome c] + O2 + 8 H(+)(in) = 4 Fe(III)-[cytochrome c] + 2 H2O + 4 H(+)(out). Its function is as follows. Component of the cytochrome c oxidase, the last enzyme in the mitochondrial electron transport chain which drives oxidative phosphorylation. The respiratory chain contains 3 multisubunit complexes succinate dehydrogenase (complex II, CII), ubiquinol-cytochrome c oxidoreductase (cytochrome b-c1 complex, complex III, CIII) and cytochrome c oxidase (complex IV, CIV), that cooperate to transfer electrons derived from NADH and succinate to molecular oxygen, creating an electrochemical gradient over the inner membrane that drives transmembrane transport and the ATP synthase. Cytochrome c oxidase is the component of the respiratory chain that catalyzes the reduction of oxygen to water. Electrons originating from reduced cytochrome c in the intermembrane space (IMS) are transferred via the dinuclear copper A center (CU(A)) of subunit 2 and heme A of subunit 1 to the active site in subunit 1, a binuclear center (BNC) formed by heme A3 and copper B (CU(B)). The BNC reduces molecular oxygen to 2 water molecules using 4 electrons from cytochrome c in the IMS and 4 protons from the mitochondrial matrix. In Oncorhynchus masou (Cherry salmon), this protein is Cytochrome c oxidase subunit 3 (mt-co3).